Consider the following 423-residue polypeptide: Glutamyl-tRNA(Gln) amidotransferase subunit A (423 aa).

Residues Lys-28 and Ser-103 each act as charge relay system in the active site. Ser-127 functions as the Acyl-ester intermediate in the catalytic mechanism.

This sequence belongs to the amidase family. GatA subfamily. Heterotrimer of A, B and C subunits.

The catalysed reaction is L-glutamyl-tRNA(Gln) + L-glutamine + ATP + H2O = L-glutaminyl-tRNA(Gln) + L-glutamate + ADP + phosphate + H(+). In terms of biological role, allows the formation of correctly charged Gln-tRNA(Gln) through the transamidation of misacylated Glu-tRNA(Gln) in organisms which lack glutaminyl-tRNA synthetase. The reaction takes place in the presence of glutamine and ATP through an activated gamma-phospho-Glu-tRNA(Gln). The polypeptide is Glutamyl-tRNA(Gln) amidotransferase subunit A (Halobacterium salinarum (strain ATCC 700922 / JCM 11081 / NRC-1) (Halobacterium halobium)).